Reading from the N-terminus, the 240-residue chain is Probable transcriptional regulatory protein Nmul_A2722 (240 aa).

Belongs to the TACO1 family.

It is found in the cytoplasm. The sequence is that of Probable transcriptional regulatory protein Nmul_A2722 from Nitrosospira multiformis (strain ATCC 25196 / NCIMB 11849 / C 71).